A 116-amino-acid polypeptide reads, in one-letter code: Large ribosomal subunit protein uL24 (116 aa).

It belongs to the universal ribosomal protein uL24 family. Part of the 50S ribosomal subunit.

Functionally, one of two assembly initiator proteins, it binds directly to the 5'-end of the 23S rRNA, where it nucleates assembly of the 50S subunit. Located at the polypeptide exit tunnel on the outside of the subunit. This chain is Large ribosomal subunit protein uL24, found in Methanothrix thermoacetophila (strain DSM 6194 / JCM 14653 / NBRC 101360 / PT) (Methanosaeta thermophila).